An 875-amino-acid polypeptide reads, in one-letter code: Serine/threonine-protein kinase ATG1 (875 aa).

The 297-residue stretch at 22-318 (YSIGPEIGKG…FNEFFNDPLI (297 aa)) folds into the Protein kinase domain. ATP contacts are provided by residues 28 to 36 (IGKGSFATV) and K51. The active-site Proton acceptor is the D168. Basic and acidic residues predominate over residues 367–379 (EKSKQDLPAREVS). 2 disordered regions span residues 367-422 (EKSK…QPHN) and 470-515 (INPR…DRRI). Polar residues predominate over residues 380 to 389 (THASESQTKA). The span at 390-405 (VDTRPSSRDEEIKEII) shows a compositional bias: basic and acidic residues. Polar residues-rich tracts occupy residues 406 to 420 (NKNS…SIQP), 473 to 490 (RRTS…NNMQ), and 497 to 508 (LRSNSSGSQRRP).

Belongs to the protein kinase superfamily. Ser/Thr protein kinase family. APG1/unc-51/ULK1 subfamily. As to quaternary structure, homodimer. Forms a ternary complex with ATG13 and ATG17.

It localises to the cytoplasm. The protein localises to the preautophagosomal structure membrane. The catalysed reaction is L-seryl-[protein] + ATP = O-phospho-L-seryl-[protein] + ADP + H(+). The enzyme catalyses L-threonyl-[protein] + ATP = O-phospho-L-threonyl-[protein] + ADP + H(+). Serine/threonine protein kinase involved in the cytoplasm to vacuole transport (Cvt) and found to be essential in autophagy, where it is required for the formation of autophagosomes. Involved in the clearance of protein aggregates which cannot be efficiently cleared by the proteasome. Required for selective autophagic degradation of the nucleus (nucleophagy) as well as for mitophagy which contributes to regulate mitochondrial quantity and quality by eliminating the mitochondria to a basal level to fulfill cellular energy requirements and preventing excess ROS production. Also involved in endoplasmic reticulum-specific autophagic process, in selective removal of ER-associated degradation (ERAD) substrates. Plays a key role in ATG9 and ATG23 cycling through the pre-autophagosomal structure and is necessary to promote ATG18 binding to ATG9 through phosphorylation of ATG9. Catalyzes phosphorylation of ATG4, decreasing the interaction between ATG4 and ATG8 and impairing deconjugation of PE-conjugated forms of ATG8. The protein is Serine/threonine-protein kinase ATG1 of Debaryomyces hansenii (strain ATCC 36239 / CBS 767 / BCRC 21394 / JCM 1990 / NBRC 0083 / IGC 2968) (Yeast).